Consider the following 284-residue polypeptide: Bifunctional protein FolD (284 aa).

NADP(+)-binding positions include 166–168 (GAS), Ser191, and Ile232.

Belongs to the tetrahydrofolate dehydrogenase/cyclohydrolase family. As to quaternary structure, homodimer.

It carries out the reaction (6R)-5,10-methylene-5,6,7,8-tetrahydrofolate + NADP(+) = (6R)-5,10-methenyltetrahydrofolate + NADPH. It catalyses the reaction (6R)-5,10-methenyltetrahydrofolate + H2O = (6R)-10-formyltetrahydrofolate + H(+). Its pathway is one-carbon metabolism; tetrahydrofolate interconversion. Its function is as follows. Catalyzes the oxidation of 5,10-methylenetetrahydrofolate to 5,10-methenyltetrahydrofolate and then the hydrolysis of 5,10-methenyltetrahydrofolate to 10-formyltetrahydrofolate. The chain is Bifunctional protein FolD from Neisseria gonorrhoeae (strain ATCC 700825 / FA 1090).